A 522-amino-acid chain; its full sequence is FAD-dependent monooxygenase fsr3 (522 aa).

The interval 1–27 is disordered; that stretch reads MKNTQTNGTHPIIDKKPNGTLNGDHQE. Arg164 serves as a coordination point for FAD. Arg245 is a catalytic residue. FAD-binding residues include Asp369 and Ala382.

It belongs to the paxM FAD-dependent monooxygenase family. FAD is required as a cofactor.

The protein operates within polyketide biosynthesis. Its function is as follows. FAD-dependent monooxygenase; part of the gene cluster that mediates the biosynthesis of fusarubins, highly pigmented naphthoquinones responsible for the coloration of the fruiting bodies. The non-reducing polyketide synthase FSR1 is responsible for the condensation of seven acetyl-CoA units to yield a haptaketide. After rings A and B are formed by aldol-type cyclization, the PKS-derived product is released as 6-O-demethylfusarubinaldehyde. Then, two hydroxyl groups at C-5 and C-10 are incorporated by FSR3, and simultaneously hydroxyl groups at C-6 and C-8 are methylated by FSR2. The aldehyde is, on the one hand, reduced by FSR3 to 8-O-methylfusarubin alcohol, which equilibrates mainly with 8-O-methylfusarubin and only small amounts of 8-O-methylnectriafurone. On the other hand, the aldehyde can be oxidized to form 8-O-methylfusarubinic acid, a reaction driven by FSR3 equilibrating with 8-O-methylfusarubinlactone, finally resulting in 8-O-methylanhydrofusarubinlactol after a further reduction step and loss of water. 8-O-Methylfusarubinic acid can also undergo decarboxylation, resulting in 8-O-methyl-13-hydroxynorjavanicin after another hydroxylation step at C-13. Both steps are most likely also accomplished by FSR3. No enzymatic function has been determined so far for either FSR4 and FSR5. Their deletion does not alter the product spectrum, but the possibility that they catalyze specific enzymatic steps during perithecium development cannot be ruled out. FSR4 might possess a regulatory function in the biosynthesis of fusarubins. In Gibberella fujikuroi (strain CBS 195.34 / IMI 58289 / NRRL A-6831) (Bakanae and foot rot disease fungus), this protein is FAD-dependent monooxygenase fsr3.